The sequence spans 339 residues: Methylthioribose-1-phosphate isomerase (339 aa).

Substrate contacts are provided by residues 52 to 54, arginine 89, and glutamine 188; that span reads RGA. The active-site Proton donor is aspartate 229. 239–240 contributes to the substrate binding site; sequence NK.

Belongs to the eIF-2B alpha/beta/delta subunits family. MtnA subfamily.

The enzyme catalyses 5-(methylsulfanyl)-alpha-D-ribose 1-phosphate = 5-(methylsulfanyl)-D-ribulose 1-phosphate. It functions in the pathway amino-acid biosynthesis; L-methionine biosynthesis via salvage pathway; L-methionine from S-methyl-5-thio-alpha-D-ribose 1-phosphate: step 1/6. Its function is as follows. Catalyzes the interconversion of methylthioribose-1-phosphate (MTR-1-P) into methylthioribulose-1-phosphate (MTRu-1-P). This is Methylthioribose-1-phosphate isomerase from Anaeromyxobacter dehalogenans (strain 2CP-C).